The primary structure comprises 121 residues: Basic phospholipase A2 BmjeTX-II (121 aa).

Disulfide bonds link Cys-26–Cys-114, Cys-28–Cys-45, Cys-44–Cys-95, Cys-50–Cys-121, Cys-51–Cys-88, Cys-58–Cys-82, and Cys-76–Cys-86. The Ca(2+) site is built by Tyr-27, Gly-29, and Gly-31. His-48 is an active-site residue. Asp-49 serves as a coordination point for Ca(2+). The active site involves Asp-89.

Ca(2+) is required as a cofactor. Expressed by the venom gland.

It is found in the secreted. It carries out the reaction a 1,2-diacyl-sn-glycero-3-phosphocholine + H2O = a 1-acyl-sn-glycero-3-phosphocholine + a fatty acid + H(+). In terms of biological role, snake venom phospholipase A2 (PLA2) that induces blockade of neuromuscular contraction in an indirectly stimulated chick biventer cervicis nerve-muscle preparation. Does not inhibit contraction of chick biventer cervicic nerve-muscle preparation in response to treatment with acetylcholine or KCl. The neuromuscular blockade is mediated by inhibitory action at the presynaptic motor nerve endings. Lyses skeletal myoblasts and myotubes in vitro, and intramuscular injection causes local muscle necrosis. Induces edema in the mouse foot pad. Induces a transient increase of IL-6 levels. PLA2 catalyzes the calcium-dependent hydrolysis of the 2-acyl groups in 3-sn-phosphoglycerides. This Bothrops marajoensis (Marajo lancehead) protein is Basic phospholipase A2 BmjeTX-II.